The primary structure comprises 1057 residues: Probable E3 ubiquitin-protein ligase HERC4 (1057 aa).

RCC1 repeat units follow at residues 1-51 (MLCW…FVLD), 52-101 (DGTV…ALND), 102-154 (KGQV…ALSK), 156-207 (SEVF…VLTL), 208-259 (SGAI…ALTK), 261-311 (GGVF…AFVP), and 313-366 (SGRI…CVKR). One can recognise an HECT domain in the interval 730–1057 (KNIDYKKPLK…IDHNEGFSLI (328 aa)). Cys-1025 serves as the catalytic Glycyl thioester intermediate.

Its subcellular location is the cytoplasm. The protein localises to the cytosol. It carries out the reaction S-ubiquitinyl-[E2 ubiquitin-conjugating enzyme]-L-cysteine + [acceptor protein]-L-lysine = [E2 ubiquitin-conjugating enzyme]-L-cysteine + N(6)-ubiquitinyl-[acceptor protein]-L-lysine.. Its pathway is protein modification; protein ubiquitination. Functionally, probable E3 ubiquitin-protein ligase involved in either protein trafficking or in the distribution of cellular structures. Required for spermatozoon maturation and fertility, and for the removal of the cytoplasmic droplet of the spermatozoon. E3 ubiquitin-protein ligases accept ubiquitin from an E2 ubiquitin-conjugating enzyme in the form of a thioester and then directly transfer it to targeted substrates. This is Probable E3 ubiquitin-protein ligase HERC4 (Herc4) from Rattus norvegicus (Rat).